The sequence spans 83 residues: MGFVDMDYDIISYSDQMPLAQHYSYFIIYSPSKSRFHVIPYKDDEYLNRFYWLQISLGFSIDASNISSQYSANPTINLSLILD.

Its subcellular location is the plastid. The protein localises to the chloroplast. This is an uncharacterized protein from Pinus thunbergii (Japanese black pine).